The chain runs to 906 residues: Alanine--tRNA ligase (906 aa).

Zn(2+) contacts are provided by His600, His604, Cys703, and His707.

This sequence belongs to the class-II aminoacyl-tRNA synthetase family. As to quaternary structure, homodimer. Requires Zn(2+) as cofactor.

The protein resides in the cytoplasm. It catalyses the reaction tRNA(Ala) + L-alanine + ATP = L-alanyl-tRNA(Ala) + AMP + diphosphate. Catalyzes the attachment of alanine to tRNA(Ala) in a two-step reaction: alanine is first activated by ATP to form Ala-AMP and then transferred to the acceptor end of tRNA(Ala). Incorrectly charged aminoacyl-tRNA(Ala) is also edited in situ by the editing domain. The sequence is that of Alanine--tRNA ligase (alaS) from Archaeoglobus fulgidus (strain ATCC 49558 / DSM 4304 / JCM 9628 / NBRC 100126 / VC-16).